The chain runs to 297 residues: 4-hydroxy-tetrahydrodipicolinate synthase (297 aa).

Thr-49 contacts pyruvate. The Proton donor/acceptor role is filled by Tyr-137. Lys-166 serves as the catalytic Schiff-base intermediate with substrate. Ile-208 contacts pyruvate.

This sequence belongs to the DapA family. As to quaternary structure, homotetramer; dimer of dimers.

The protein localises to the cytoplasm. The catalysed reaction is L-aspartate 4-semialdehyde + pyruvate = (2S,4S)-4-hydroxy-2,3,4,5-tetrahydrodipicolinate + H2O + H(+). It participates in amino-acid biosynthesis; L-lysine biosynthesis via DAP pathway; (S)-tetrahydrodipicolinate from L-aspartate: step 3/4. Its function is as follows. Catalyzes the condensation of (S)-aspartate-beta-semialdehyde [(S)-ASA] and pyruvate to 4-hydroxy-tetrahydrodipicolinate (HTPA). This is 4-hydroxy-tetrahydrodipicolinate synthase from Chlorobium phaeobacteroides (strain BS1).